Consider the following 205-residue polypeptide: Probable thymidylate kinase (205 aa).

Gly7 to Ser14 contributes to the ATP binding site.

Belongs to the thymidylate kinase family.

It catalyses the reaction dTMP + ATP = dTDP + ADP. The sequence is that of Probable thymidylate kinase from Methanoculleus marisnigri (strain ATCC 35101 / DSM 1498 / JR1).